The sequence spans 443 residues: Threonine/serine transporter TdcC (443 aa).

Helical transmembrane passes span Trp24–Ala44, Gly45–Phe65, Val95–Tyr115, Val140–Met160, Val163–Ile183, Ile207–Ile227, Ala259–Ser279, Ala319–Leu339, Leu363–Pro383, Ile385–Pro405, and Ser423–Met443.

This sequence belongs to the amino acid/polyamine transporter 2 family. SdaC/TdcC subfamily.

The protein resides in the cell inner membrane. It catalyses the reaction L-threonine(in) + H(+)(in) = L-threonine(out) + H(+)(out). It carries out the reaction L-serine(in) + H(+)(in) = L-serine(out) + H(+)(out). Its function is as follows. Involved in the import of threonine and serine into the cell, with the concomitant import of a proton (symport system). In Edwardsiella piscicida, this protein is Threonine/serine transporter TdcC.